The sequence spans 145 residues: D-aminoacyl-tRNA deacylase (145 aa).

Residues 137 to 138 (GP) carry the Gly-cisPro motif, important for rejection of L-amino acids motif.

The protein belongs to the DTD family. Homodimer.

Its subcellular location is the cytoplasm. The catalysed reaction is glycyl-tRNA(Ala) + H2O = tRNA(Ala) + glycine + H(+). The enzyme catalyses a D-aminoacyl-tRNA + H2O = a tRNA + a D-alpha-amino acid + H(+). An aminoacyl-tRNA editing enzyme that deacylates mischarged D-aminoacyl-tRNAs. Also deacylates mischarged glycyl-tRNA(Ala), protecting cells against glycine mischarging by AlaRS. Acts via tRNA-based rather than protein-based catalysis; rejects L-amino acids rather than detecting D-amino acids in the active site. By recycling D-aminoacyl-tRNA to D-amino acids and free tRNA molecules, this enzyme counteracts the toxicity associated with the formation of D-aminoacyl-tRNA entities in vivo and helps enforce protein L-homochirality. In Salmonella paratyphi C (strain RKS4594), this protein is D-aminoacyl-tRNA deacylase.